We begin with the raw amino-acid sequence, 391 residues long: Somatostatin receptor type 1 (391 aa).

Low complexity predominate over residues 1–11 (MFPNGTASSPS). Positions 1–49 (MFPNGTASSPSSPSPSPGSCGEGGGSRGPGAGAADGMEEPGRNASQNGT) are disordered. The Extracellular portion of the chain corresponds to 1-55 (MFPNGTASSPSSPSPSPGSCGEGGGSRGPGAGAADGMEEPGRNASQNGTLSEGQG). Residue Asn-4 is glycosylated (N-linked (GlcNAc...) asparagine). Gly residues predominate over residues 20 to 33 (CGEGGGSRGPGAGA). 2 N-linked (GlcNAc...) asparagine glycosylation sites follow: Asn-43 and Asn-47. The helical transmembrane segment at 56-83 (SAILISFIYSVVCLVGLCGNSMVIYVIL) threads the bilayer. At 84-93 (RYAKMKTATN) the chain is on the cytoplasmic side. The chain crosses the membrane as a helical span at residues 94–119 (IYILNLAIADELLMLSVPFLVTSTLL). At 120 to 130 (RHWPFGALLCR) the chain is on the extracellular side. Cys-129 and Cys-207 are oxidised to a cystine. A helical transmembrane segment spans residues 131 to 152 (LVLSVDAVNMFTSIYCLTVLSV). The Cytoplasmic portion of the chain corresponds to 153-174 (DRYVAVVHPIKAARYRRPTVAK). Residues 175 to 195 (VVNLGVWVLSLLVILPIVVFS) form a helical membrane-spanning segment. The Extracellular portion of the chain corresponds to 196-218 (RTAANSDGTVACNMLMPEPAQRW). A helical transmembrane segment spans residues 219–243 (LVGFVLYTFLMGFLLPVGAICLCYV). Residues 244–269 (LIIAKMRMVALKAGWQQRKRSERKIT) are Cytoplasmic-facing. The helical transmembrane segment at 270 to 295 (LMVMMVVMVFVICWMPFYVVQLVNVF) threads the bilayer. At 296 to 302 (AEQDDAT) the chain is on the extracellular side. The helical transmembrane segment at 303-326 (VSQLSVILGYANSCANPILYGFLS) threads the bilayer. At 327–391 (DNFKRSFQRI…GTCTSRITTL (65 aa)) the chain is on the cytoplasmic side. Residue Cys-338 is the site of S-palmitoyl cysteine attachment.

It belongs to the G-protein coupled receptor 1 family. Interacts with SKB1.

Its subcellular location is the cell membrane. Functionally, receptor for somatostatin with higher affinity for somatostatin-14 than -28. This receptor is coupled via pertussis toxin sensitive G proteins to inhibition of adenylyl cyclase. In addition it stimulates phosphotyrosine phosphatase and Na(+)/H(+) exchanger via pertussis toxin insensitive G proteins. The chain is Somatostatin receptor type 1 (SSTR1) from Canis lupus familiaris (Dog).